We begin with the raw amino-acid sequence, 319 residues long: Transmembrane and ubiquitin-like domain-containing protein 2 (319 aa).

The chain crosses the membrane as a helical span at residues 36-56 (VMVVAGVVALTLALVLAWLST). Disordered regions lie at residues 88-128 (VNQG…ARGE) and 145-165 (RQAGLGSSRPEAPLGLDDGSC). The segment covering 95–111 (PTEHPHPSGGNDDKAEE) has biased composition (basic and acidic residues). Positions 173–246 (INVRLKFLND…IHCHRSPPGA (74 aa)) constitute a Ubiquitin-like domain. Transmembrane regions (helical) follow at residues 264–284 (LGVNVGSLMVPVFVVLLGVVW) and 298–318 (ATISLVGVTVFFSILVFGMYG).

The protein localises to the membrane. The polypeptide is Transmembrane and ubiquitin-like domain-containing protein 2 (Tmub2) (Mus musculus (Mouse)).